Reading from the N-terminus, the 1182-residue chain is Myosin IC heavy chain (1182 aa).

One can recognise a Myosin motor domain in the interval 15-698 (EGLDDMTLLS…MLFSLEETRE (684 aa)). 109-116 (GESGAGKT) contacts ATP. An actin-binding region spans residues 571–593 (AAELVATLMKSTPHYIRTIKPND). Residues 774 to 957 (RNRFSMISVR…QFHIASGLPA (184 aa)) form the TH1 domain. Disordered stretches follow at residues 999-1052 (KPAP…PAPG) and 1064-1103 (SKPL…PAGQ). Positions 1013–1042 (KKPAPTAPGGAPMMKKPAPAPGGAPMMKKP) are enriched in low complexity. A compositionally biased stretch (pro residues) spans 1081–1092 (PTAPGGPAPAGA). The SH3 domain occupies 1123–1182 (PPPQQYIALYEYDAMQPDELTFKENDVINLIKKVDADWWQGELVRTKQIGMLPSNYVQQI).

The protein belongs to the TRAFAC class myosin-kinesin ATPase superfamily. Myosin family. In terms of assembly, myosin I heavy chain is single-headed. Dimer of a heavy and a light chain. Inability to self-assemble into filaments.

It is found in the cell projection. The protein resides in the lamellipodium. In terms of biological role, myosin is a protein that binds to actin and has ATPase activity that is activated by actin. Involved in the process of phagocytosis and appears to support streaming behavior. In Dictyostelium discoideum (Social amoeba), this protein is Myosin IC heavy chain (myoC).